Reading from the N-terminus, the 183-residue chain is Regulatory protein RecX (183 aa).

Positions 1 to 12 are enriched in polar residues; the sequence is MTSFPHPSTSES. Residues 1–26 form a disordered region; it reads MTSFPHPSTSESGPDPDSEPNREEQA.

Belongs to the RecX family.

Its subcellular location is the cytoplasm. Modulates RecA activity. In Mycobacterium sp. (strain JLS), this protein is Regulatory protein RecX.